The sequence spans 541 residues: Berberine bridge enzyme-like 1 (541 aa).

Positions 1–20 (MKLSCLVFLIVSSLVSSSLA) are cleaved as a signal peptide. Residues asparagine 25, asparagine 38, asparagine 73, asparagine 136, asparagine 302, asparagine 339, and asparagine 357 are each glycosylated (N-linked (GlcNAc...) asparagine). Cysteine 35 and cysteine 98 form a disulfide bridge. The 180-residue stretch at 76–255 (TSPKPLLVIA…LSFKIKLVPV (180 aa)) folds into the FAD-binding PCMH-type domain. A cross-link (6-(S-cysteinyl)-8alpha-(pros-histidyl)-FAD (His-Cys)) is located at residues 113 to 180 (HDYDGVSYIS…GTHGFPAGVC (68 aa)).

This sequence belongs to the oxygen-dependent FAD-linked oxidoreductase family. It depends on FAD as a cofactor. The FAD cofactor is bound via a bicovalent 6-S-cysteinyl, 8alpha-N1-histidyl FAD linkage. In terms of tissue distribution, accumulates in cell walls of etiolated hypocotyls.

The protein localises to the secreted. It localises to the cell wall. The polypeptide is Berberine bridge enzyme-like 1 (Arabidopsis thaliana (Mouse-ear cress)).